A 124-amino-acid polypeptide reads, in one-letter code: Large ribosomal subunit protein uL18 (124 aa).

The protein belongs to the universal ribosomal protein uL18 family. In terms of assembly, part of the 50S ribosomal subunit; part of the 5S rRNA/L5/L18/L25 subcomplex. Contacts the 5S and 23S rRNAs.

Functionally, this is one of the proteins that bind and probably mediate the attachment of the 5S RNA into the large ribosomal subunit, where it forms part of the central protuberance. In Desulfosudis oleivorans (strain DSM 6200 / JCM 39069 / Hxd3) (Desulfococcus oleovorans), this protein is Large ribosomal subunit protein uL18.